The sequence spans 392 residues: Putative F-box protein At1g71320 (392 aa).

Positions 8–55 (NPKTIFIPDDIAEGIFHHLPIKSLARFKVLSKKWTSMIESTYFSHKRL) constitute an F-box domain.

The sequence is that of Putative F-box protein At1g71320 from Arabidopsis thaliana (Mouse-ear cress).